An 873-amino-acid chain; its full sequence is V-type proton ATPase 116 kDa subunit a 2 (873 aa).

Residues 1–407 (MGSLSRSEEM…TIITFPFLFS (407 aa)) are Cytoplasmic-facing. A helical transmembrane segment spans residues 408–428 (CMFGDLGHGCIMLMAGLWFVL). Residues 429–445 (REKNLQARNIKDEIFNM) are Lumenal-facing. The helical transmembrane segment at 446 to 466 (FFGGRYIILLMGLFSIHAGII) threads the bilayer. Topologically, residues 467 to 543 (YNDMFAKSFN…NKLNFLNSMK (77 aa)) are cytoplasmic. The chain crosses the membrane as a helical span at residues 544–564 (MKLSVILGISQMTFGVILSFF). N565 and N569 each carry an N-linked (GlcNAc...) asparagine glycan. Topologically, residues 565–574 (NHTYNKSKID) are lumenal. The chain crosses the membrane as a helical span at residues 575–595 (IFTVFIPQMLFMGCIFMYLCL). The Cytoplasmic portion of the chain corresponds to 596 to 614 (QIILKWLFFWTKEATVFGQ). A helical membrane pass occupies residues 615–635 (IYPGSHCAPSLLIGLINMFMM). At 636-668 (KDRNAGFVVDGGKVNGEYREVETCYLSQWYPGQ) the chain is on the lumenal side. The helical transmembrane segment at 669-689 (SVIEMILVVIAVICVPVMLFG) threads the bilayer. Residues 690 to 785 (KPIHHVMQQK…LWALSLAHAQ (96 aa)) lie on the Cytoplasmic side of the membrane. The helical transmembrane segment at 786–806 (LSEVLWHMVFVTGGLGISGTA) threads the bilayer. A topological domain (lumenal) is located at residue G807. The chain crosses the membrane as a helical span at residues 808-828 (FIAVYVVFFIFFVLTISILVL). Over 829–873 (MEGLSAFLHTLRLHWVEFQSKFYLGLGYPFVPYSFKTALQEAEAA) the chain is Cytoplasmic.

It belongs to the V-ATPase 116 kDa subunit family. V-ATPase is a heteromultimeric enzyme made up of two complexes: the ATP-hydrolytic V1 complex and the proton translocation V0 complex. The V1 complex consists of three catalytic AB heterodimers that form a heterohexamer, three peripheral stalks each consisting of EG heterodimers, one central rotor including subunits D and F, and the regulatory subunits C and H. The proton translocation complex V0 consists of the proton transport subunit a, a ring of proteolipid subunits c9c'', rotary subunit d, subunits e and f, and the accessory subunits vah-19/Ac45 and vah-20/PRR. Interacts with V-type proton ATPase subunit C vha-11. Expressed in the H-shaped excretory cell (at protein level). Expressed in hypodermal cells around the vulva. Expressed in the main epidermal syncytium. Expressed in the sheath cells associated with head and tail sensory organs; specifically, expressed in the apical sheath cells of the amphids and CEP neuron and in the sheath cells of the OLQ sensory organ.

Its subcellular location is the apical cell membrane. The protein resides in the endosome. It is found in the multivesicular body membrane. Its function is as follows. Subunit of the V0 complex of vacuolar(H+)-ATPase (V-ATPase), a multisubunit enzyme composed of a peripheral complex (V1) that hydrolyzes ATP and a membrane integral complex (V0) that translocates protons. V-ATPase is responsible for acidifying and maintaining the pH of intracellular compartments and in some cell types, is targeted to the plasma membrane, where it is responsible for acidifying the extracellular environment. Involved in the assembly of the V-ATPase complex. The V-ATPase is required for the function of the excretory canal. Independently of the V1 complex, the V0 complex of the V-ATPase is required for multivesicular body membrane fusion with the apical membrane of the epidermal cells during exosome release and thus regulates the release of cuticle components such as Hedgehog-related peptide wrt-2 but not collagen. Also, in the epidermis, regulates the trafficking of che-14 and rdy-2. Regulates the secretion of granular material found in the amphid channel and in controlling osmoregulation in the amphid pocket. This is V-type proton ATPase 116 kDa subunit a 2 from Caenorhabditis elegans.